Here is a 381-residue protein sequence, read N- to C-terminus: Cytochrome b (381 aa).

The next 4 membrane-spanning stretches (helical) occupy residues 34–54 (FGSLLGLCLIMQIITGLFLAM), 78–99 (WLMRNIHAYGASFFFICIYLHI), 114–134 (WNIGVVLLFLLMATAFVGYVL), and 179–199 (FFAFHFLLPFLILALSVIHIL). His-84 and His-98 together coordinate heme b. Residues His-183 and His-197 each contribute to the heme b site. His-202 is an a ubiquinone binding site. Transmembrane regions (helical) follow at residues 227 to 247 (YKDLFGFLIVITLLATLALFM), 289 to 309 (LGGVLALLFSIFILLLVPLLH), 321 to 341 (LTQIFFWSLVTNAIILTWIGG), and 348 to 368 (FIMVGQIASVAYFSLFLFVIP).

Belongs to the cytochrome b family. As to quaternary structure, the cytochrome bc1 complex contains 3 respiratory subunits (MT-CYB, CYC1 and UQCRFS1), 2 core proteins (UQCRC1 and UQCRC2) and probably 6 low-molecular weight proteins. The cofactor is heme b.

Its subcellular location is the mitochondrion inner membrane. Component of the ubiquinol-cytochrome c reductase complex (complex III or cytochrome b-c1 complex) that is part of the mitochondrial respiratory chain. The b-c1 complex mediates electron transfer from ubiquinol to cytochrome c. Contributes to the generation of a proton gradient across the mitochondrial membrane that is then used for ATP synthesis. This is Cytochrome b (mt-cyb) from Scyliorhinus canicula (Small-spotted catshark).